Reading from the N-terminus, the 110-residue chain is UPF0122 protein gbs1018 (110 aa).

It belongs to the UPF0122 family.

Functionally, might take part in the signal recognition particle (SRP) pathway. This is inferred from the conservation of its genetic proximity to ftsY/ffh. May be a regulatory protein. This Streptococcus agalactiae serotype III (strain NEM316) protein is UPF0122 protein gbs1018.